Reading from the N-terminus, the 403-residue chain is CinA-like protein (403 aa).

This sequence belongs to the CinA family.

The sequence is that of CinA-like protein from Petrotoga mobilis (strain DSM 10674 / SJ95).